A 330-amino-acid polypeptide reads, in one-letter code: GTPase Obg (330 aa).

In terms of domain architecture, Obg spans Met-1–Leu-159. An OBG-type G domain is found at Ser-160–Lys-327. GTP is bound by residues Gly-166–Ser-173, Phe-191–Val-195, Asp-212–Gly-215, Asn-279–Asp-282, and Ser-308–Tyr-310. Mg(2+)-binding residues include Ser-173 and Thr-193.

Belongs to the TRAFAC class OBG-HflX-like GTPase superfamily. OBG GTPase family. In terms of assembly, monomer. Mg(2+) serves as cofactor.

It localises to the cytoplasm. Its function is as follows. An essential GTPase which binds GTP, GDP and possibly (p)ppGpp with moderate affinity, with high nucleotide exchange rates and a fairly low GTP hydrolysis rate. Plays a role in control of the cell cycle, stress response, ribosome biogenesis and in those bacteria that undergo differentiation, in morphogenesis control. The protein is GTPase Obg of Rickettsia massiliae (strain Mtu5).